The chain runs to 93 residues: C-C motif chemokine 14 (93 aa).

Positions 1–19 (MKISVAAIPFFLLITIALG) are cleaved as a signal peptide. A glycan (O-linked (GalNAc...) serine; partial) is linked at Ser-26. Intrachain disulfides connect Cys-35–Cys-59 and Cys-36–Cys-75.

Belongs to the intercrine beta (chemokine CC) family. Post-translationally, the N-terminal processed forms HCC-1(3-74), HCC-1(4-74) and HCC-1(9-74) are produced in small amounts by proteolytic cleavage after secretion in blood. In terms of processing, HCC-1(1-74), but not HCC-1(3-74) and HCC-1(4-74), is partially O-glycosylated; the O-linked glycan consists of one Gal-GalNAc disaccharide, further modified by two N-acetylneuraminic acids. Expressed constitutively in several normal tissues: spleen, liver, skeletal and heart muscle, gut, and bone marrow, present at high concentrations (1-80 nM) in plasma.

It is found in the secreted. In terms of biological role, has weak activities on human monocytes and acts via receptors that also recognize MIP-1 alpha. It induces intracellular Ca(2+) changes and enzyme release, but no chemotaxis, at concentrations of 100-1,000 nM, and is inactive on T-lymphocytes, neutrophils, and eosinophil leukocytes. Enhances the proliferation of CD34 myeloid progenitor cells. The processed form HCC-1(9-74) is a chemotactic factor that attracts monocytes, eosinophils, and T-cells and is a ligand for CCR1, CCR3 and CCR5. The chain is C-C motif chemokine 14 (CCL14) from Homo sapiens (Human).